The sequence spans 275 residues: Uronate dehydrogenase (275 aa).

NAD(+) is bound by residues 22 to 23, 42 to 44, 60 to 61, and 80 to 84; these read GL, DIA, DL, and FGGVS. Substrate-binding positions include Ser84 and 120 to 122; that span reads SNH. Tyr145 (proton acceptor) is an active-site residue. Lys149 lines the NAD(+) pocket. Position 174 (Ser174) interacts with substrate. Ser175 lines the NAD(+) pocket. Arg183 is a substrate binding site.

This sequence belongs to the NAD(P)-dependent epimerase/dehydratase family. In terms of assembly, homohexamer.

The enzyme catalyses beta-D-galacturonate + NAD(+) = D-galactaro-1,5-lactone + NADH + H(+). It carries out the reaction beta-D-glucuronate + NAD(+) = D-glucaro-1,5-lactone + NADH + H(+). The protein operates within carbohydrate acid metabolism; D-galacturonate degradation via prokaryotic oxidative pathway. Catalyzes the oxidation of beta-D-galacturonate and beta-D-glucuronate to galactarate and D-glucarate, respectively. Cannot use NADP(+) instead of NAD(+) as cosubstrate. In Pseudomonas syringae pv. tomato (strain ATCC BAA-871 / DC3000), this protein is Uronate dehydrogenase (udh).